Here is a 440-residue protein sequence, read N- to C-terminus: Chromosome partition protein MukF (440 aa).

The leucine-zipper stretch occupies residues 208–236; sequence LSETSGTLRELQDTLEAAGDKLQANLLRI.

The protein belongs to the MukF family. As to quaternary structure, interacts, and probably forms a ternary complex, with MukE and MukB via its C-terminal region. The complex formation is stimulated by calcium or magnesium. It is required for an interaction between MukE and MukB.

The protein localises to the cytoplasm. It localises to the nucleoid. Functionally, involved in chromosome condensation, segregation and cell cycle progression. May participate in facilitating chromosome segregation by condensation DNA from both sides of a centrally located replisome during cell division. Not required for mini-F plasmid partitioning. Probably acts via its interaction with MukB and MukE. Overexpression results in anucleate cells. It has a calcium binding activity. The sequence is that of Chromosome partition protein MukF from Photorhabdus laumondii subsp. laumondii (strain DSM 15139 / CIP 105565 / TT01) (Photorhabdus luminescens subsp. laumondii).